The sequence spans 141 residues: Large ribosomal subunit protein uL11 (141 aa).

The protein belongs to the universal ribosomal protein uL11 family. As to quaternary structure, part of the ribosomal stalk of the 50S ribosomal subunit. Interacts with L10 and the large rRNA to form the base of the stalk. L10 forms an elongated spine to which L12 dimers bind in a sequential fashion forming a multimeric L10(L12)X complex. Post-translationally, one or more lysine residues are methylated.

Forms part of the ribosomal stalk which helps the ribosome interact with GTP-bound translation factors. The polypeptide is Large ribosomal subunit protein uL11 (Pediococcus pentosaceus (strain ATCC 25745 / CCUG 21536 / LMG 10740 / 183-1w)).